The chain runs to 506 residues: MAP kinase kinase MKK2/SSP33 (506 aa).

A disordered region spans residues 1-69; sequence MASMFRPPES…TSTTSSMASN (69 aa). Over residues 26-52 the composition is skewed to polar residues; it reads LVQNAKSTNDGQHLNRSPYSSVNESPY. A compositionally biased stretch (low complexity) spans 53–69; it reads SNNSTSATSTTSSMASN. One can recognise a Protein kinase domain in the interval 214–481; the sequence is ITTLGILGEG…PRQMLKHPWI (268 aa). ATP contacts are provided by residues 220-228 and K243; that span reads LGEGAGGSV. Residue D342 is the Proton acceptor of the active site.

The protein belongs to the protein kinase superfamily. STE Ser/Thr protein kinase family. MAP kinase kinase subfamily.

It carries out the reaction L-seryl-[protein] + ATP = O-phospho-L-seryl-[protein] + ADP + H(+). It catalyses the reaction L-threonyl-[protein] + ATP = O-phospho-L-threonyl-[protein] + ADP + H(+). The enzyme catalyses L-tyrosyl-[protein] + ATP = O-phospho-L-tyrosyl-[protein] + ADP + H(+). Serine/threonine protein kinase involved in a signal transduction pathway that plays a role in yeast cell morphogenesis and cell growth. This pathway seems to start by SMP3; then involves the kinase PKC1 that may act on the BCK1 kinase that then phosphorylates MKK1 and MKK2 which themselves phosphorylate the MPK1 kinase. The protein is MAP kinase kinase MKK2/SSP33 (MKK2) of Saccharomyces cerevisiae (strain ATCC 204508 / S288c) (Baker's yeast).